A 352-amino-acid polypeptide reads, in one-letter code: MLNVREVQKLKASNKRLWSLSWNHKGSVLISSGEDRVIKLWAKCNDQLWGSSFSLPEAHKKSIRCVTWSPCGTYIASASFDGTVTIWKISEAHSAPEMEALVSLEGHTSEVKCVAWCPSGHLIATCGRDKSVWLWEFDDEEDVQCVSVLQPHSQDVKSVAWHPHGEVLVSTSYDNKINVYREELDDWTVFAQLSGHDSTVWKAEFSPSGDILASCSDDLCVKLWSWEGVCGKSSSWMCIATLSGYHTRTIFDLNWSPDSQLLASCGSDNRLCIYKMPANGLTHIGGKPCFEEPPVLWGHVPNAHSEDVNCVRWKPGNITDISHSESISNCHLFLTTASDDGYIKFWSIEYEL.

WD repeat units follow at residues 12 to 51, 58 to 97, 106 to 145, 151 to 190, 195 to 234, 245 to 284, and 303 to 352; these read ASNKRLWSLSWNHKGSVLISSGEDRVIKLWAKCNDQLWGS, AHKKSIRCVTWSPCGTYIASASFDGTVTIWKISEAHSAPE, GHTSEVKCVAWCPSGHLIATCGRDKSVWLWEFDDEEDVQC, PHSQDVKSVAWHPHGEVLVSTSYDNKINVYREELDDWTVF, GHDSTVWKAEFSPSGDILASCSDDLCVKLWSWEGVCGKSS, YHTRTIFDLNWSPDSQLLASCGSDNRLCIYKMPANGLTHI, and AHSE…EYEL.

The protein belongs to the WD repeat CIA1 family.

Essential component of the cytosolic iron-sulfur (Fe/S) protein assembly machinery. Required for the maturation of extramitochondrial Fe/S proteins. This Schistosoma japonicum (Blood fluke) protein is Probable cytosolic iron-sulfur protein assembly protein CIAO1 homolog.